We begin with the raw amino-acid sequence, 301 residues long: Diaminopimelate epimerase (301 aa).

Substrate is bound by residues Asn-15, Gln-47, and Asn-67. Cys-76 (proton donor) is an active-site residue. Substrate is bound by residues 77-78, Asn-163, Asn-197, and 215-216; these read GN and ER. The Proton acceptor role is filled by Cys-224. 225–226 lines the substrate pocket; it reads GS. The tract at residues 280-301 is disordered; sequence SGSLDPSTGLWSRDGTQEAGAR.

This sequence belongs to the diaminopimelate epimerase family. Homodimer.

Its subcellular location is the cytoplasm. It catalyses the reaction (2S,6S)-2,6-diaminopimelate = meso-2,6-diaminopimelate. It participates in amino-acid biosynthesis; L-lysine biosynthesis via DAP pathway; DL-2,6-diaminopimelate from LL-2,6-diaminopimelate: step 1/1. In terms of biological role, catalyzes the stereoinversion of LL-2,6-diaminopimelate (L,L-DAP) to meso-diaminopimelate (meso-DAP), a precursor of L-lysine and an essential component of the bacterial peptidoglycan. The polypeptide is Diaminopimelate epimerase (Rhizobium leguminosarum bv. trifolii (strain WSM2304)).